A 236-amino-acid chain; its full sequence is MSNQLIYSGKAKDIYETADDEIVLISYKDQVTMLNGAHKEMIEGKGSLNNQISALIFDRLNRVGVSTHFIKQLSETEQLNKRVAIIPLEVVLRNVAAGSFSKRFGVKEGQALDEPIIELYYKNDALDDPFINDEHVSFLKLATDEQIAYIKQETHRINAYLKEWFASVGLTLVDFKLEFGFDKEGMLILADEFSPDNCRLWDNAGRHMDKDVFRRQLGSLTQAYETVLERLRALDQ.

Belongs to the SAICAR synthetase family.

The enzyme catalyses 5-amino-1-(5-phospho-D-ribosyl)imidazole-4-carboxylate + L-aspartate + ATP = (2S)-2-[5-amino-1-(5-phospho-beta-D-ribosyl)imidazole-4-carboxamido]succinate + ADP + phosphate + 2 H(+). The protein operates within purine metabolism; IMP biosynthesis via de novo pathway; 5-amino-1-(5-phospho-D-ribosyl)imidazole-4-carboxamide from 5-amino-1-(5-phospho-D-ribosyl)imidazole-4-carboxylate: step 1/2. This is Phosphoribosylaminoimidazole-succinocarboxamide synthase from Streptococcus equi subsp. zooepidemicus (strain H70).